A 955-amino-acid chain; its full sequence is Anion exchange protein 4 (955 aa).

3 disordered regions span residues 20-50 (VGQL…PEDP), 154-190 (HTQT…PLRQ), and 331-352 (PHRT…PELQ). A run of 4 helical transmembrane segments spans residues 387-407 (AVLY…GLLG), 415-435 (GVLE…LMAG), 472-492 (VGIW…SVLV), and 503-523 (FCAL…LNLA). The interval 387 to 955 (AVLYIYLATV…KAPEINISVN (569 aa)) is membrane (anion exchange). Residues Asn548 and Asn572 are each glycosylated (N-linked (GlcNAc...) asparagine). A run of 7 helical transmembrane segments spans residues 596–616 (VPDI…FAIA), 637–657 (FSSI…GLAM), 684–704 (PWWL…LIFM), 730–750 (LFCV…WYVS), 785–804 (LTGL…APVL), 811–830 (VLYG…IQFM), and 871–891 (LWII…LGLV). The tract at residues 918 to 955 (RNVPEKGLEPGHSFSGSDSEDSELMYQPKAPEINISVN) is disordered. An N-linked (GlcNAc...) asparagine glycan is attached at Asn951.

It belongs to the anion exchanger (TC 2.A.31) family. In terms of tissue distribution, highly expressed in kidney. Expressed in the outer medulla and the inner medulla in the kidney cortex. Only expressed in beta-intercalated cells.

Its subcellular location is the lateral cell membrane. The protein localises to the apical cell membrane. It is found in the basolateral cell membrane. The catalysed reaction is 2 hydrogencarbonate(out) + chloride(in) + Na(+)(out) = 2 hydrogencarbonate(in) + chloride(out) + Na(+)(in). It carries out the reaction K(+)(in) + 2 hydrogencarbonate(in) + chloride(out) = K(+)(out) + 2 hydrogencarbonate(out) + chloride(in). The enzyme catalyses Li(+)(in) + 2 hydrogencarbonate(in) + chloride(out) = Li(+)(out) + 2 hydrogencarbonate(out) + chloride(in). It catalyses the reaction Rb(+)(in) + 2 hydrogencarbonate(in) + chloride(out) = Rb(+)(out) + 2 hydrogencarbonate(out) + chloride(in). The catalysed reaction is Cs(+)(in) + 2 hydrogencarbonate(in) + chloride(out) = Cs(+)(out) + 2 hydrogencarbonate(out) + chloride(in). In terms of biological role, electroneutral Cl(-)/HCO3(-) antiporter that favors chloride ion entry and efflux of hydrogencarbonate and sodium ion across the basolateral membrane and may participat in salivary secretion. Also mediates Cl(-)/HCO3(-) exchange activity in the presence of K(+) as well as Cs(+), Li(+), and Rb(+). Does not contribute to Cl(-)/HCO3(-) exchanger in the apical membrane of the upper villous epithelium. In Oryctolagus cuniculus (Rabbit), this protein is Anion exchange protein 4.